Consider the following 162-residue polypeptide: Phospholipase A and acyltransferase 3 (162 aa).

The Cytoplasmic segment spans residues 1–133 (MRAPIPEPKP…VARSDQVRDV (133 aa)). One can recognise an LRAT domain in the interval 13–129 (LIEIFRPFYR…LRYGVARSDQ (117 aa)). Catalysis depends on residues H23 and H35. C113 serves as the catalytic Acyl-thioester intermediate. A helical transmembrane segment spans residues 134-154 (IIAASVAGMGLAAMSLIGVMF). The Lumenal portion of the chain corresponds to 155 to 162 (SRNKRQKQ).

The protein belongs to the H-rev107 family. In terms of assembly, interacts with PPP2R1A; this interaction might decrease PP2A activity. In terms of tissue distribution, widely expressed. Low expression, if any, in hematopoietic cells and thymus. In testis, confined to round spermatids. Expressed in normal ovarian epithelial cells. Down-regulated in some ovarian carcinomas and testicular germ cell tumors. Highly expressed in white adipose tissue.

It localises to the cell membrane. The protein localises to the cytoplasm. Its subcellular location is the cytosol. It is found in the perinuclear region. The protein resides in the peroxisome membrane. It localises to the mitochondrion membrane. The protein localises to the nucleus envelope. Its subcellular location is the lysosome membrane. It is found in the endoplasmic reticulum membrane. The enzyme catalyses a 1,2-diacyl-sn-glycero-3-phosphocholine + H2O = a 1-acyl-sn-glycero-3-phosphocholine + a fatty acid + H(+). The catalysed reaction is a 1,2-diacyl-sn-glycero-3-phosphocholine + H2O = a 2-acyl-sn-glycero-3-phosphocholine + a fatty acid + H(+). It carries out the reaction 1,2-dihexadecanoyl-sn-glycero-3-phosphocholine + H2O = 1-hexadecanoyl-sn-glycero-3-phosphocholine + hexadecanoate + H(+). It catalyses the reaction 1,2-dihexadecanoyl-sn-glycero-3-phosphocholine + H2O = 2-hexadecanoyl-sn-glycero-3-phosphocholine + hexadecanoate + H(+). The enzyme catalyses 1-hexadecanoyl-2-(9Z-octadecenoyl)-sn-glycero-3-phosphocholine + H2O = 2-(9Z-octadecenoyl)-sn-glycero-3-phosphocholine + hexadecanoate + H(+). The catalysed reaction is 1-hexadecanoyl-2-(9Z-octadecenoyl)-sn-glycero-3-phosphocholine + H2O = 1-hexadecanoyl-sn-glycero-3-phosphocholine + (9Z)-octadecenoate + H(+). It carries out the reaction 1-hexadecanoyl-2-(5Z,8Z,11Z,14Z-eicosatetraenoyl)-sn-glycero-3-phosphocholine + H2O = 1-hexadecanoyl-sn-glycero-3-phosphocholine + (5Z,8Z,11Z,14Z)-eicosatetraenoate + H(+). It catalyses the reaction 1-hexadecanoyl-2-(5Z,8Z,11Z,14Z-eicosatetraenoyl)-sn-glycero-3-phosphocholine + H2O = 2-(5Z,8Z,11Z,14Z)-eicosatetraenoyl-sn-glycero-3-phosphocholine + hexadecanoate + H(+). The enzyme catalyses 1-hexadecanoyl-2-(9Z,12Z-octadecadienoyl)-sn-glycero-3-phosphoethanolamine + H2O = 1-hexadecanoyl-sn-glycero-3-phosphoethanolamine + (9Z,12Z)-octadecadienoate + H(+). The catalysed reaction is 1-hexadecanoyl-2-(9Z,12Z-octadecadienoyl)-sn-glycero-3-phosphoethanolamine + H2O = 2-(9Z,12Z)-octadecadienoyl-sn-glycero-3-phosphoethanolamine + hexadecanoate + H(+). It carries out the reaction 1-hexadecanoyl-2-(5Z,8Z,11Z,14Z-eicosatetraenoyl)-sn-glycero-3-phosphoethanolamine + H2O = 1-hexadecanoyl-sn-glycero-3-phosphoethanolamine + (5Z,8Z,11Z,14Z)-eicosatetraenoate + H(+). It catalyses the reaction 1-hexadecanoyl-2-(5Z,8Z,11Z,14Z-eicosatetraenoyl)-sn-glycero-3-phosphoethanolamine + H2O = 2-(5Z,8Z,11Z,14Z)-eicosatetraenoyl-sn-glycero-3-phosphoethanolamine + hexadecanoate + H(+). The enzyme catalyses 1-hexanoyl-2-acyl-sn-glycero-3-phosphocholine + H2O = hexanoate + a 2-acyl-sn-glycero-3-phosphocholine + H(+). The catalysed reaction is 1-hexanoyl-2-acyl-sn-glycero-3-phosphocholine + H2O = 1-hexanoyl-sn-glycero-3-phosphocholine + a fatty acid + H(+). It carries out the reaction 1,2-diheptadecanoyl-sn-glycero-3-phosphoethanolamine + 1-(9Z-octadecenoyl)-2-hexadecanoyl-sn-glycero-3-phosphocholine = 1,2-diheptadecanoyl-sn-glycero-3-phospho-N-hexadecanoyl-ethanolamine + 1-(9Z-octadecenoyl)-sn-glycero-3-phosphocholine + H(+). It catalyses the reaction 1,2-diheptadecanoyl-sn-glycero-3-phosphoethanolamine + 1-(9Z-octadecenoyl)-2-hexadecanoyl-sn-glycero-3-phosphocholine = 1,2-diheptadecanoyl-sn-glycero-3-phospho-N-(9Z-octadecenoyl)-ethanolamine + 2-hexadecanoyl-sn-glycero-3-phosphocholine + H(+). The enzyme catalyses 1,2-dihexanoyl-sn-glycero-3-phosphoethanolamine + 2-heptanoyl-sn-glycero-3-phosphocholine = hexanoyl-sn-glycero-3-phosphoethanolamine + 1-hexanoyl-2-heptanoyl-sn-glycero-3-phosphocholine. The catalysed reaction is 1-hexadecanoyl-2-octadecanoyl-sn-glycero-3-phosphocholine + H2O = octadecanoate + 1-hexadecanoyl-sn-glycero-3-phosphocholine + H(+). It carries out the reaction 1-hexadecanoyl-2-octadecanoyl-sn-glycero-3-phosphocholine + H2O = 2-octadecanoyl-sn-glycero-3-phosphocholine + hexadecanoate + H(+). It catalyses the reaction 1-octadecanoyl-2-hexadecanoyl-sn-glycero-3-phosphocholine + H2O = 1-octadecanoyl-sn-glycero-3-phosphocholine + hexadecanoate + H(+). The enzyme catalyses 1-octadecanoyl-2-hexadecanoyl-sn-glycero-3-phosphocholine + H2O = 2-hexadecanoyl-sn-glycero-3-phosphocholine + octadecanoate + H(+). The catalysed reaction is 1-hexadecanoyl-2-(9Z,12Z-octadecadienoyl)-sn-glycero-3-phosphocholine + H2O = (9Z,12Z)-octadecadienoate + 1-hexadecanoyl-sn-glycero-3-phosphocholine + H(+). It carries out the reaction 1-hexadecanoyl-2-(9Z,12Z-octadecadienoyl)-sn-glycero-3-phosphocholine + H2O = 2-(9Z,12Z-octadecadienoyl)-sn-glycero-3-phosphocholine + hexadecanoate + H(+). It catalyses the reaction 1,2-di-(9Z-octadecenoyl)-sn-glycero-3-phosphocholine + H2O = 2-(9Z-octadecenoyl)-sn-glycero-3-phosphocholine + (9Z)-octadecenoate + H(+). The enzyme catalyses 1,2-dihexadecanoyl-sn-glycero-3-phosphocholine + H2O = hexadecanoyl-sn-glycero-3-phosphocholine + hexadecanoate + H(+). The catalysed reaction is 1,2-di-(9Z-octadecenoyl)-sn-glycero-3-phosphocholine + H2O = 1-(9Z-octadecenoyl)-sn-glycero-3-phosphocholine + (9Z)-octadecenoate + H(+). It carries out the reaction 1,2-di-(9Z-octadecenoyl)-sn-glycero-3-phosphoethanolamine + 1,2-dihexadecanoyl-sn-glycero-3-phosphocholine = hexadecanoyl-sn-glycero-3-phosphocholine + N-hexadecanoyl-1,2-di-(9Z-octadecenoyl)-sn-glycero-3-phosphoethanolamine + H(+). It catalyses the reaction 1,2-di-(9Z,12Z-octadecadienoyl)-sn-glycero-3-phosphocholine + H2O = 1-(9Z,12Z)-octadecadienoyl-sn-glycero-3-phosphocholine + (9Z,12Z)-octadecadienoate + H(+). In terms of biological role, exhibits both phospholipase A1/2 and acyltransferase activities. Shows phospholipase A1 (PLA1) and A2 (PLA2) activity, catalyzing the calcium-independent release of fatty acids from the sn-1 or sn-2 position of glycerophospholipids. For most substrates, PLA1 activity is much higher than PLA2 activity. Shows O-acyltransferase activity,catalyzing the transfer of a fatty acyl group from glycerophospholipid to the hydroxyl group of lysophospholipid. Shows N-acyltransferase activity, catalyzing the calcium-independent transfer of a fatty acyl group at the sn-1 position of phosphatidylcholine (PC) and other glycerophospholipids to the primary amine of phosphatidylethanolamine (PE), forming N-acylphosphatidylethanolamine (NAPE), which serves as precursor for N-acylethanolamines (NAEs). Exhibits high N-acyltransferase activity and low phospholipase A1/2 activity. Required for complete organelle rupture and degradation that occur during eye lens terminal differentiation, when fiber cells that compose the lens degrade all membrane-bound organelles in order to provide lens with transparency to allow the passage of light. Organelle membrane degradation is probably catalyzed by the phospholipase activity. (Microbial infection) Acts as a host factor for picornaviruses: required during early infection to promote viral genome release into the cytoplasm. May act as a cellular sensor of membrane damage at sites of virus entry, which relocalizes to sites of membrane rupture upon virus unfection. Facilitates safe passage of the RNA away from LGALS8, enabling viral genome translation by host ribosome. May also be involved in initiating pore formation, increasing pore size or in maintaining pores for genome delivery. The lipid-modifying enzyme activity is required for this process. This chain is Phospholipase A and acyltransferase 3, found in Homo sapiens (Human).